We begin with the raw amino-acid sequence, 452 residues long: Proline--tRNA ligase (452 aa).

The protein belongs to the class-II aminoacyl-tRNA synthetase family. ProS type 2 subfamily. Homodimer.

The protein localises to the cytoplasm. It catalyses the reaction tRNA(Pro) + L-proline + ATP = L-prolyl-tRNA(Pro) + AMP + diphosphate. In terms of biological role, catalyzes the attachment of proline to tRNA(Pro) in a two-step reaction: proline is first activated by ATP to form Pro-AMP and then transferred to the acceptor end of tRNA(Pro). This chain is Proline--tRNA ligase, found in Jannaschia sp. (strain CCS1).